The following is a 354-amino-acid chain: Glutaminyl-peptide cyclotransferase (354 aa).

A mitochondrion-targeting transit peptide spans methionine 1–tyrosine 8. The cysteines at positions 136 and 158 are disulfide-linked. A Zn(2+)-binding site is contributed by aspartate 153. The active-site Proton acceptor is the glutamate 190. Glutamate 191 provides a ligand contact to Zn(2+). The active-site Proton acceptor is aspartate 228. Histidine 318 contacts Zn(2+).

The protein belongs to the glutaminyl-peptide cyclotransferase family.

The protein resides in the secreted. It is found in the mitochondrion. The enzyme catalyses N-terminal L-glutaminyl-[peptide] = N-terminal 5-oxo-L-prolyl-[peptide] + NH4(+). With respect to regulation, inhibited by imidazoles (imidazole, benzimidazole, 1-benzylimidazole, 1-methylimidazole, P150/03 and N-omega-acetylhistamine) and cysteamines (cysteamine and N-dimethylcysteamine). Inhibited by PDB50 1(3,4-dimethoxyphenyl)-3-(3-imidazol-1-ylpropyl)thiourea. In terms of biological role, acts as a glutaminyl-peptide cyclotransferase. Responsible for the biosynthesis of pyroglutamyl peptides. Might be more efficient in the conversion of tri and tetrapeptides in vitro. Might have a relative preference for substrates containing hydrophobic amino acids in vitro. This chain is Glutaminyl-peptide cyclotransferase, found in Drosophila melanogaster (Fruit fly).